A 322-amino-acid chain; its full sequence is MTVLNTTDKRKADDTVNKLDGKLKQPRLDNFFKTNTSSPALKDTQVLDNKENNSVSKFNKEKWAENLTPAQRKLLQLEIDTLESSWFDALKDEFLKPYFLNLKEFLMKEWQSQRVFPPKEDIYSWSHHTPLHKTKVILLGQDPYHNIGQAHGLCFSVRPGIPCPPSLVNIYKAIKIDYPDFVIPKTGYLVPWADQGILMLNASLTVRAHQAASHSGKGWETFTSAVLQVALNRNRKGLVILAWGTPAAKRLQGLPLKAHYVLRSVHPSPLSAHRGFFECHHFKKTNEWLEEQYGPEKCINWSAVSEQKAKIKSSELESSSTE.

The active-site Proton acceptor is D142.

The protein belongs to the uracil-DNA glycosylase (UDG) superfamily. UNG family.

Its subcellular location is the mitochondrion. The protein resides in the nucleus. It catalyses the reaction Hydrolyzes single-stranded DNA or mismatched double-stranded DNA and polynucleotides, releasing free uracil.. Excises uracil residues from the DNA which can arise as a result of misincorporation of dUMP residues by DNA polymerase or due to deamination of cytosine. The sequence is that of Uracil-DNA glycosylase (ung1) from Schizosaccharomyces pombe (strain 972 / ATCC 24843) (Fission yeast).